Consider the following 584-residue polypeptide: Pentatricopeptide repeat-containing protein At2g01510, mitochondrial (584 aa).

The N-terminal 20 residues, 1 to 20, are a transit peptide targeting the mitochondrion; sequence MLAKQTPLTKQMLSELLRAS. 9 PPR repeats span residues 73–107, 108–142, 143–173, 174–208, 209–243, 244–274, 275–309, 310–344, and 348–378; these read RIFLWNTLFKGYVRNQLPFESLLLYKKMRDLGVRP, DEFTYPFVVKAISQLGDFSCGFALHAHVVKYGFGC, LGIVATELVMMYMKFGELSSAEFLFESMQVK, DLVAWNAFLAVCVQTGNSAIALEYFNKMCADAVQF, DSFTVVSMLSACGQLGSLEIGEEIYDRARKEEIDC, NIIVENARLDMHLKCGNTEAARVLFEEMKQR, NVVSWSTMIVGYAMNGDSREALTLFTTMQNEGLRP, NYVTFLGVLSACSHAGLVNEGKRYFSLMVQSNDKN, and RKEHYACMVDLLGRSGLLEEAYEFIKKMPVE. Positions 383–458 are type E motif; that stretch reads IWGALLGACA…VAAYSSVEFE (76 aa). A type E(+) motif region spans residues 459–489; sequence GKIHFFNRGDKSHPQSKAIYEKLDEILKKIR. Residues 490-584 are type DYW motif; that stretch reads KMGYVPDTCS…NGVCSCKEFW (95 aa).

The protein belongs to the PPR family. PCMP-H subfamily.

The protein localises to the mitochondrion. This is Pentatricopeptide repeat-containing protein At2g01510, mitochondrial (PCMP-H37) from Arabidopsis thaliana (Mouse-ear cress).